Reading from the N-terminus, the 124-residue chain is Large ribosomal subunit protein uL18 (124 aa).

It belongs to the universal ribosomal protein uL18 family. In terms of assembly, part of the 50S ribosomal subunit; part of the 5S rRNA/L5/L18/L25 subcomplex. Contacts the 5S and 23S rRNAs.

Functionally, this is one of the proteins that bind and probably mediate the attachment of the 5S RNA into the large ribosomal subunit, where it forms part of the central protuberance. This is Large ribosomal subunit protein uL18 from Aquifex pyrophilus.